The chain runs to 853 residues: DNA mismatch repair protein MutS (853 aa).

614-621 contributes to the ATP binding site; the sequence is GPNMGGKS.

This sequence belongs to the DNA mismatch repair MutS family.

In terms of biological role, this protein is involved in the repair of mismatches in DNA. It is possible that it carries out the mismatch recognition step. This protein has a weak ATPase activity. This chain is DNA mismatch repair protein MutS, found in Escherichia coli O157:H7 (strain EC4115 / EHEC).